A 310-amino-acid chain; its full sequence is Translocator protein BipD (310 aa).

Coiled-coil stretches lie at residues 127–171 (DPIL…LQDY) and 250–299 (DTAR…AIST).

This sequence belongs to the invasin protein D family.

The protein localises to the secreted. Required for invasion of epithelial cells, as well as for survival within host cells, escape from endocytic vesicles and subsequent actin-tail formation. Probably regulates the secretion of effectors BipB and BipC and their final integration into the target cell membrane. This Burkholderia pseudomallei (strain 1106a) protein is Translocator protein BipD (bipD).